A 370-amino-acid chain; its full sequence is Dual-specificity RNA methyltransferase RlmN (370 aa).

The active-site Proton acceptor is Glu93. The region spanning 99–337 is the Radical SAM core domain; that stretch reads EEGRGTLCVS…VTTVRKTRGD (239 aa). Cys106 and Cys343 form a disulfide bridge. Residues Cys113, Cys117, and Cys120 each coordinate [4Fe-4S] cluster. S-adenosyl-L-methionine-binding positions include 167-168, Ser199, 221-223, and Asn300; these read GE and SLH. Cys343 functions as the S-methylcysteine intermediate in the catalytic mechanism.

It belongs to the radical SAM superfamily. RlmN family. [4Fe-4S] cluster serves as cofactor.

The protein resides in the cytoplasm. The enzyme catalyses adenosine(2503) in 23S rRNA + 2 reduced [2Fe-2S]-[ferredoxin] + 2 S-adenosyl-L-methionine = 2-methyladenosine(2503) in 23S rRNA + 5'-deoxyadenosine + L-methionine + 2 oxidized [2Fe-2S]-[ferredoxin] + S-adenosyl-L-homocysteine. It catalyses the reaction adenosine(37) in tRNA + 2 reduced [2Fe-2S]-[ferredoxin] + 2 S-adenosyl-L-methionine = 2-methyladenosine(37) in tRNA + 5'-deoxyadenosine + L-methionine + 2 oxidized [2Fe-2S]-[ferredoxin] + S-adenosyl-L-homocysteine. Specifically methylates position 2 of adenine 2503 in 23S rRNA and position 2 of adenine 37 in tRNAs. m2A2503 modification seems to play a crucial role in the proofreading step occurring at the peptidyl transferase center and thus would serve to optimize ribosomal fidelity. The polypeptide is Dual-specificity RNA methyltransferase RlmN (Francisella tularensis subsp. holarctica (strain FTNF002-00 / FTA)).